The following is a 1372-amino-acid chain: DNA-directed RNA polymerase subunit beta (1372 aa).

This sequence belongs to the RNA polymerase beta chain family. As to quaternary structure, the RNAP catalytic core consists of 2 alpha, 1 beta, 1 beta' and 1 omega subunit. When a sigma factor is associated with the core the holoenzyme is formed, which can initiate transcription.

The enzyme catalyses RNA(n) + a ribonucleoside 5'-triphosphate = RNA(n+1) + diphosphate. Its function is as follows. DNA-dependent RNA polymerase catalyzes the transcription of DNA into RNA using the four ribonucleoside triphosphates as substrates. The protein is DNA-directed RNA polymerase subunit beta of Bradyrhizobium sp. (strain ORS 278).